The following is a 319-amino-acid chain: Ornithine carbamoyltransferase (319 aa).

Residues 55-58 (STRT), glutamine 82, arginine 106, and 133-136 (HPCQ) contribute to the carbamoyl phosphate site. Residues asparagine 171, aspartate 234, and 238-239 (SM) contribute to the L-ornithine site. Residues 274–275 (CL) and arginine 302 contribute to the carbamoyl phosphate site.

This sequence belongs to the aspartate/ornithine carbamoyltransferase superfamily. OTCase family.

It is found in the cytoplasm. It catalyses the reaction carbamoyl phosphate + L-ornithine = L-citrulline + phosphate + H(+). Its pathway is amino-acid biosynthesis; L-arginine biosynthesis; L-arginine from L-ornithine and carbamoyl phosphate: step 1/3. Functionally, reversibly catalyzes the transfer of the carbamoyl group from carbamoyl phosphate (CP) to the N(epsilon) atom of ornithine (ORN) to produce L-citrulline. This chain is Ornithine carbamoyltransferase, found in Corynebacterium diphtheriae (strain ATCC 700971 / NCTC 13129 / Biotype gravis).